Here is a 201-residue protein sequence, read N- to C-terminus: Coiled-coil domain-containing protein 195 (201 aa).

A coiled-coil region spans residues 4-38 (DIQLMRLIQEMRAEIHKLEKENQALRMKLTASSQR). Disordered regions lie at residues 28–72 (LRMK…DAAP) and 179–201 (SKNS…IIAE). A compositionally biased stretch (low complexity) spans 179 to 188 (SKNSSSLKHS). Polar residues predominate over residues 189 to 201 (PNQATNQLSIIAE).

This chain is Coiled-coil domain-containing protein 195, found in Homo sapiens (Human).